The sequence spans 39 residues: Contryphan-Cal1 (39 aa).

A signal peptide spans 1 to 20 (MTRTAVLLLTLLFLVAMAAS). An intrachain disulfide couples C29 to C35.

Expressed by the venom duct.

It localises to the secreted. Functionally, probable neurotoxin. This chain is Contryphan-Cal1, found in Californiconus californicus (California cone).